A 130-amino-acid chain; its full sequence is L-aspartate semialdehyde sulfurtransferase iron-sulfur subunit (130 aa).

2 consecutive 4Fe-4S ferredoxin-type domains span residues 72 to 101 and 102 to 130; these read RPIH…FDET and WSLC…KLGE. C81, C84, C87, C91, C111, C114, C117, and C121 together coordinate [4Fe-4S] cluster.

As to quaternary structure, may form a complex with MA_1821. [4Fe-4S] cluster is required as a cofactor.

It functions in the pathway amino-acid biosynthesis. In terms of biological role, required for O-acetylhomoserine sulfhydrylase (OAHS)-independent homocysteine (Hcy) biosynthesis. Together with MA_1821, catalyzes the condensation of sulfide with aspartate semialdehyde to generate homocysteine. May be involved in the reduction of the disulfide formed in MA_1821. This Methanosarcina acetivorans (strain ATCC 35395 / DSM 2834 / JCM 12185 / C2A) protein is L-aspartate semialdehyde sulfurtransferase iron-sulfur subunit.